The following is a 452-amino-acid chain: MQKGAKIEDEGRQSRIQSRNFIIQRSDPRTRGSSVYSSRSSSYNVRSSISPGVYQQLSSSGITDFKGNREKEKREMQNLNERLASYIEKVHFLDAQVKKLEAENEALRNRKVEDLQPIRDAYENELRQARKVIDELASSKGVAEGKLAGLQDEIGSLRELIVTYESQAKDYRKKIDSLGNQLGEFEGELQSLRLRVGSLEDENAKLRELLEKVQEQNRRLRADLDTETAAHIEADCLAQTKTEEAEFYRDLLDQLELLKPEPIQIKGMDYADFWKSELAKCVREINLAYDEKIDLIQQDCEAKYASQINQLRSGNVKDGMQLQHSQEEVKKLRGQLQDKNAAYAELATRIASLQAERDELARQLADIERELEEQKLKYNRDVGDLESELTSVLAQLQHLMDAKMSLELEIACYKKLLEGEESRVGLRTLVEQAIGTQSKGSASLKDAIQSSS.

Residues 1–13 (MQKGAKIEDEGRQ) show a composition bias toward basic and acidic residues. The segment at 1–50 (MQKGAKIEDEGRQSRIQSRNFIIQRSDPRTRGSSVYSSRSSSYNVRSSIS) is disordered. Positions 1 to 75 (MQKGAKIEDE…KGNREKEKRE (75 aa)) are head. The span at 14 to 23 (SRIQSRNFII) shows a compositional bias: polar residues. The span at 33–50 (SSVYSSRSSSYNVRSSIS) shows a compositional bias: low complexity. Residues 72-424 (EKREMQNLNE…KLLEGEESRV (353 aa)) form the IF rod domain. Positions 76 to 111 (MQNLNERLASYIEKVHFLDAQVKKLEAENEALRNRK) are coil 1A. A linker 1 region spans residues 112 to 121 (VEDLQPIRDA). The interval 122-259 (YENELRQARK…DLLDQLELLK (138 aa)) is coil 1B. The residue at position 156 (S156) is a Sulfoserine. Residues 260–278 (PEPIQIKGMDYADFWKSEL) form a linker 12 region. A coil 2 region spans residues 279 to 424 (AKCVREINLA…KLLEGEESRV (146 aa)). The interval 425-452 (GLRTLVEQAIGTQSKGSASLKDAIQSSS) is tail.

This sequence belongs to the intermediate filament family.

This chain is Retrograde protein of 51 kDa (RGP51), found in Lymnaea stagnalis (Great pond snail).